The chain runs to 837 residues: Intestinal mucin-like protein (837 aa).

4 consecutive repeat copies span residues 17–27 (PSTPSTPPPST), 28–38 (PTTPTSSQTTT), 39–50 (PSTPSTTSSKST), and 51–62 (PSTPQSTSSKST). Residues 17–70 (PSTPSTPPPSTPTTPTSSQTTTPSTPSTTSSKSTPSTPQSTSSKSTPSTPPKTT) are 5 X 11 AA approximate tandem repeats. The interval 17–75 (PSTPSTPPPSTPTTPTSSQTTTPSTPSTTSSKSTPSTPQSTSSKSTPSTPPKTTLPGCL) is disordered. The span at 29-70 (TTPTSSQTTTPSTPSTTSSKSTPSTPQSTSSKSTPSTPPKTT) shows a compositional bias: low complexity. The 5; truncated repeat unit spans residues 63 to 70 (PSTPPKTT). N-linked (GlcNAc...) asparagine glycosylation is found at N91 and N164. In terms of domain architecture, VWFD spans 141–324 (CYCTGWGDPH…VNDPSKPHCP (184 aa)). 3 disulfide bridges follow: C143/C284, C165/C323, and C189/C197. A probably important for disulfide-bond mediated mucin polymerization (link domain) region spans residues 149 to 837 (PHFVTFDGLY…RSSPRLLGRK (689 aa)). 12 N-linked (GlcNAc...) asparagine glycosylation sites follow: N278, N289, N344, N410, N444, N515, N538, N612, N627, N695, N727, and N749. 2 VWFC domains span residues 472 to 543 (CGCV…TSCK) and 581 to 648 (GVCV…KKCQ). Disulfide bonds link C732–C779, C746–C793, C755–C809, and C759–C811. Residues 732–817 (CSAIPVMKEI…SCLCQGTVCE (86 aa)) enclose the CTCK domain.

Multimeric. As to expression, coats the epithelia of the intestines.

Its subcellular location is the secreted. The sequence is that of Intestinal mucin-like protein from Rattus norvegicus (Rat).